Here is a 127-residue protein sequence, read N- to C-terminus: Aspartate 1-decarboxylase (127 aa).

Catalysis depends on serine 25, which acts as the Schiff-base intermediate with substrate; via pyruvic acid. Position 25 is a pyruvic acid (Ser) (serine 25). A substrate-binding site is contributed by threonine 57. Tyrosine 58 functions as the Proton donor in the catalytic mechanism. Residue 73-75 (GAA) coordinates substrate.

It belongs to the PanD family. Heterooctamer of four alpha and four beta subunits. Pyruvate is required as a cofactor. Post-translationally, is synthesized initially as an inactive proenzyme, which is activated by self-cleavage at a specific serine bond to produce a beta-subunit with a hydroxyl group at its C-terminus and an alpha-subunit with a pyruvoyl group at its N-terminus.

Its subcellular location is the cytoplasm. It catalyses the reaction L-aspartate + H(+) = beta-alanine + CO2. The protein operates within cofactor biosynthesis; (R)-pantothenate biosynthesis; beta-alanine from L-aspartate: step 1/1. Its function is as follows. Catalyzes the pyruvoyl-dependent decarboxylation of aspartate to produce beta-alanine. The chain is Aspartate 1-decarboxylase from Clostridium botulinum (strain Okra / Type B1).